Here is a 439-residue protein sequence, read N- to C-terminus: Xylose isomerase (439 aa).

Residues H101 and D104 contribute to the active site. E232, E268, H271, D296, D307, D309, and D339 together coordinate Mg(2+).

This sequence belongs to the xylose isomerase family. As to quaternary structure, homotetramer. The cofactor is Mg(2+).

Its subcellular location is the cytoplasm. The catalysed reaction is alpha-D-xylose = alpha-D-xylulofuranose. The sequence is that of Xylose isomerase from Pseudoalteromonas atlantica (strain T6c / ATCC BAA-1087).